Here is a 357-residue protein sequence, read N- to C-terminus: Holliday junction branch migration complex subunit RuvB (357 aa).

Low complexity predominate over residues 1–15 (MAIQSDSLSSLPDSP). Positions 1 to 30 (MAIQSDSLSSLPDSPRIVAPQPVSPNEESI) are disordered. A large ATPase domain (RuvB-L) region spans residues 13-195 (DSPRIVAPQP…FGIVSRLEFY (183 aa)). ATP is bound by residues Leu34, Arg35, Gly76, Lys79, Thr80, Thr81, 142–144 (EDF), Arg185, Tyr195, and Arg232. Thr80 serves as a coordination point for Mg(2+). The segment at 196–266 (NTDELARIVT…AAGRALAMLD (71 aa)) is small ATPAse domain (RuvB-S). Positions 269–357 (PQGLDVMDRK…SGGTGELFSK (89 aa)) are head domain (RuvB-H). Positions 305, 324, and 329 each coordinate DNA.

The protein belongs to the RuvB family. Homohexamer. Forms an RuvA(8)-RuvB(12)-Holliday junction (HJ) complex. HJ DNA is sandwiched between 2 RuvA tetramers; dsDNA enters through RuvA and exits via RuvB. An RuvB hexamer assembles on each DNA strand where it exits the tetramer. Each RuvB hexamer is contacted by two RuvA subunits (via domain III) on 2 adjacent RuvB subunits; this complex drives branch migration. In the full resolvosome a probable DNA-RuvA(4)-RuvB(12)-RuvC(2) complex forms which resolves the HJ.

It is found in the cytoplasm. The enzyme catalyses ATP + H2O = ADP + phosphate + H(+). In terms of biological role, the RuvA-RuvB-RuvC complex processes Holliday junction (HJ) DNA during genetic recombination and DNA repair, while the RuvA-RuvB complex plays an important role in the rescue of blocked DNA replication forks via replication fork reversal (RFR). RuvA specifically binds to HJ cruciform DNA, conferring on it an open structure. The RuvB hexamer acts as an ATP-dependent pump, pulling dsDNA into and through the RuvAB complex. RuvB forms 2 homohexamers on either side of HJ DNA bound by 1 or 2 RuvA tetramers; 4 subunits per hexamer contact DNA at a time. Coordinated motions by a converter formed by DNA-disengaged RuvB subunits stimulates ATP hydrolysis and nucleotide exchange. Immobilization of the converter enables RuvB to convert the ATP-contained energy into a lever motion, pulling 2 nucleotides of DNA out of the RuvA tetramer per ATP hydrolyzed, thus driving DNA branch migration. The RuvB motors rotate together with the DNA substrate, which together with the progressing nucleotide cycle form the mechanistic basis for DNA recombination by continuous HJ branch migration. Branch migration allows RuvC to scan DNA until it finds its consensus sequence, where it cleaves and resolves cruciform DNA. The protein is Holliday junction branch migration complex subunit RuvB of Bordetella bronchiseptica (strain ATCC BAA-588 / NCTC 13252 / RB50) (Alcaligenes bronchisepticus).